A 568-amino-acid polypeptide reads, in one-letter code: CTP synthase (568 aa).

An amidoligase domain region spans residues M1–L276. S18 is a CTP binding site. S18 contributes to the UTP binding site. Residues S19–L24 and D76 contribute to the ATP site. Mg(2+) is bound by residues D76 and E150. Residues D157–E159, K197–Q202, and K233 contribute to the CTP site. Residues K197 to Q202 and K233 each bind UTP. The Glutamine amidotransferase type-1 domain maps to R301–A550. G364 is a binding site for L-glutamine. The Nucleophile; for glutamine hydrolysis role is filled by C391. Residues L392 to Q395, E415, and R476 each bind L-glutamine. Active-site residues include H523 and E525.

The protein belongs to the CTP synthase family. In terms of assembly, homotetramer.

It carries out the reaction UTP + L-glutamine + ATP + H2O = CTP + L-glutamate + ADP + phosphate + 2 H(+). It catalyses the reaction L-glutamine + H2O = L-glutamate + NH4(+). The catalysed reaction is UTP + NH4(+) + ATP = CTP + ADP + phosphate + 2 H(+). Its pathway is pyrimidine metabolism; CTP biosynthesis via de novo pathway; CTP from UDP: step 2/2. Its activity is regulated as follows. Allosterically activated by GTP, when glutamine is the substrate; GTP has no effect on the reaction when ammonia is the substrate. The allosteric effector GTP functions by stabilizing the protein conformation that binds the tetrahedral intermediate(s) formed during glutamine hydrolysis. Inhibited by the product CTP, via allosteric rather than competitive inhibition. Functionally, catalyzes the ATP-dependent amination of UTP to CTP with either L-glutamine or ammonia as the source of nitrogen. Regulates intracellular CTP levels through interactions with the four ribonucleotide triphosphates. The chain is CTP synthase from Saccharopolyspora erythraea (strain ATCC 11635 / DSM 40517 / JCM 4748 / NBRC 13426 / NCIMB 8594 / NRRL 2338).